Consider the following 470-residue polypeptide: E3 ubiquitin-protein ligase TRAIP (470 aa).

The segment at 7–50 (CTICSDFFDHSRDVAAIHCGHTFHLQCLIQWFETAPSRTCPQCR) adopts an RING-type; atypical zinc-finger fold. A coiled-coil region spans residues 76 to 277 (AEFLKNELDS…RKKLMILQGT (202 aa)). Positions 211-470 (LKEARKATGE…QPKLDTFLCQ (260 aa)) are interaction with CYLD. Residues 461–470 (QPKLDTFLCQ) carry the PIP-box motif.

This sequence belongs to the TRAIP family. Interacts (via PIP-box) with PCNA. Binds TRAF1, TRAF2, TRAF3, TRAF5 and TRAF6 is part of the receptor-TRAF signaling complex. May interact with CYLD; the C-terminus interacts with CYLD, however the interaction was not detected with the full-length protein. Interacts with POLK and POLN. Interacts with UIMC1. Post-translationally, autoubiquitinated. In terms of processing, sumoylated; sumoylation is required for nuclear localization. Sumoylation increases protein stability, possibly by preventing ubiquitination. As to expression, detected in testis and thymus, and at lower levels in spleen.

The protein resides in the nucleus. It is found in the nucleoplasm. The protein localises to the nucleolus. Its subcellular location is the chromosome. It localises to the cytoplasm. The protein resides in the perinuclear region. It catalyses the reaction S-ubiquitinyl-[E2 ubiquitin-conjugating enzyme]-L-cysteine + [acceptor protein]-L-lysine = [E2 ubiquitin-conjugating enzyme]-L-cysteine + N(6)-ubiquitinyl-[acceptor protein]-L-lysine.. Its pathway is protein modification; protein ubiquitination. Its function is as follows. E3 ubiquitin ligase required to protect genome stability in response to replication stress. Acts as a key regulator of interstrand cross-link repair, which takes place when both strands of duplex DNA are covalently tethered together, thereby blocking replication and transcription. During mitosis, controls the choice between the two pathways of replication-coupled interstrand-cross-link repair by mediating ubiquitination of MCM7 subunit of the CMG helicase complex. Short ubiquitin chains on MCM7 promote recruitment of DNA glycosylase NEIL3. If the interstrand cross-link cannot be cleaved by NEIL3, the ubiquitin chains continue to grow on MCM7, promoting the unloading of the CMG helicase complex by the VCP/p97 ATPase, enabling the Fanconi anemia DNA repair pathway. Only catalyzes ubiquitination of MCM7 when forks converge. Also involved in the repair of covalent DNA-protein cross-links (DPCs) during DNA synthesis: promotes ubiquitination of DPCs, leading to their degradation by the proteasome. Has also been proposed to play a role in promoting translesion synthesis by mediating the assembly of 'Lys-63'-linked poly-ubiquitin chains on the Y-family polymerase POLN in order to facilitate bypass of DNA lesions and preserve genomic integrity. The function in translesion synthesis is however controversial. Acts as a regulator of the spindle assembly checkpoint. Also acts as a negative regulator of innate immune signaling by inhibiting activation of NF-kappa-B mediated by TNF. Negatively regulates TLR3/4- and RIG-I-mediated IRF3 activation and subsequent IFNB1 production and cellular antiviral response by promoting 'Lys-48'-linked polyubiquitination of TNK1 leading to its proteasomal degradation. This chain is E3 ubiquitin-protein ligase TRAIP, found in Mus musculus (Mouse).